The sequence spans 143 residues: Probable FAD-linked sulfhydryl oxidase R368 (143 aa).

One can recognise an ERV/ALR sulfhydryl oxidase domain in the interval 10 to 104 (GWTFSHAVAL…YPEAIEAIEK (95 aa)). Residues cysteine 46 and cysteine 49 are joined by a disulfide bond. The helical transmembrane segment at 117 to 137 (FFIILIIIGIIVIIYLMYIVF) threads the bilayer.

FAD serves as cofactor.

It localises to the membrane. It carries out the reaction 2 R'C(R)SH + O2 = R'C(R)S-S(R)CR' + H2O2. FAD-dependent sulfhydryl oxidase that catalyzes disulfide bond formation. In Acanthamoeba polyphaga mimivirus (APMV), this protein is Probable FAD-linked sulfhydryl oxidase R368.